Consider the following 255-residue polypeptide: MGQKVNPLGFRLGVTQEHHSYWFATNKQFAGFLEEDQKIRHYIYQYVQKHIRESSNTSYGYSGVSKIEIKRDTELIHVEIHTSGFPALLIKGQIKEKNRDKNKSNKNSALDQSVNKNQNKNTGQELEKMWRYVQRSLTLSNGKFRMTLSKVSNPYKEANIVAEYIARQLENRVAFRRAMKQAIKDAKENGQVKGIKIQISGRLNGAEIARVEWAREGRVPLQTLRAKIDYCHYPAQTKYGVLGIKVWIFQGEGWT.

A KH type-2 domain is found at 51–124; the sequence is IRESSNTSYG…NKNQNKNTGQ (74 aa). A disordered region spans residues 96-121; the sequence is EKNRDKNKSNKNSALDQSVNKNQNKN. Residues 108 to 121 are compositionally biased toward polar residues; that stretch reads SALDQSVNKNQNKN.

Belongs to the universal ribosomal protein uS3 family. Part of the 30S ribosomal subunit.

Its subcellular location is the plastid. It localises to the chloroplast. This chain is Small ribosomal subunit protein uS3c (rps3), found in Chaetosphaeridium globosum (Charophycean green alga).